Consider the following 193-residue polypeptide: Probable GTP-binding protein EngB (193 aa).

One can recognise an EngB-type G domain in the interval 22 to 193; that stretch reads MYPEISFIGR…ELWQIIEDLL (172 aa). GTP-binding positions include 30–37, 57–61, 75–78, 142–145, and 174–176; these read GRSNVGKS, GKTRT, DLPG, TKMD, and FSS. Mg(2+) is bound by residues S37 and T59.

The protein belongs to the TRAFAC class TrmE-Era-EngA-EngB-Septin-like GTPase superfamily. EngB GTPase family. Requires Mg(2+) as cofactor.

Functionally, necessary for normal cell division and for the maintenance of normal septation. The chain is Probable GTP-binding protein EngB from Natranaerobius thermophilus (strain ATCC BAA-1301 / DSM 18059 / JW/NM-WN-LF).